A 361-amino-acid polypeptide reads, in one-letter code: G2/mitotic-specific cyclin-B (361 aa).

It belongs to the cyclin family. Cyclin AB subfamily.

Essential for the control of the cell cycle at the G2/M (mitosis) transition. Interacts with the CDC2 protein kinase to form MPF. G2/M cyclins accumulate steadily during G2 and are abruptly destroyed at mitosis. This chain is G2/mitotic-specific cyclin-B, found in Hydra vulgaris (Hydra).